The following is a 177-amino-acid chain: Large ribosomal subunit protein uL6 (177 aa).

It belongs to the universal ribosomal protein uL6 family. Part of the 50S ribosomal subunit.

In terms of biological role, this protein binds to the 23S rRNA, and is important in its secondary structure. It is located near the subunit interface in the base of the L7/L12 stalk, and near the tRNA binding site of the peptidyltransferase center. In Rhizobium etli (strain ATCC 51251 / DSM 11541 / JCM 21823 / NBRC 15573 / CFN 42), this protein is Large ribosomal subunit protein uL6.